Consider the following 334-residue polypeptide: Beta-hexosaminidase (334 aa).

Substrate-binding positions include aspartate 60, arginine 68, arginine 133, and 163-164; that span reads KH. Histidine 176 acts as the Proton donor/acceptor in catalysis. Aspartate 247 (nucleophile) is an active-site residue.

This sequence belongs to the glycosyl hydrolase 3 family. NagZ subfamily.

The protein localises to the cytoplasm. It catalyses the reaction Hydrolysis of terminal non-reducing N-acetyl-D-hexosamine residues in N-acetyl-beta-D-hexosaminides.. The protein operates within cell wall biogenesis; peptidoglycan recycling. In terms of biological role, plays a role in peptidoglycan recycling by cleaving the terminal beta-1,4-linked N-acetylglucosamine (GlcNAc) from peptide-linked peptidoglycan fragments, giving rise to free GlcNAc, anhydro-N-acetylmuramic acid and anhydro-N-acetylmuramic acid-linked peptides. The chain is Beta-hexosaminidase from Xanthomonas oryzae pv. oryzae (strain KACC10331 / KXO85).